The sequence spans 478 residues: MSIRVTQKSYKVSTSAPRSFSSRSYTSGPGSRISSSAFSRVGSSSSFRGGLGTGMSMAGSYGGAPGLGGITAVTVNQSLLSPLKLEVDPNIQAVRTQEKEQIKTLNNKFASFIDKVRHLEQQNKVLETKWNLLQQQKTARSNIDNMFESYINNLRRQLETLAQEKLKLEVELGNMQGLVEDFKTKYEDEIQKRTDMENEFVIIKKDVDEAYMNKVELESRLEGLTDEINFYRQLYEEEIREMQSQISDTSVVLEMDNNRNLDLDGIIAEVKAQYEEIANRSRAEAEAMYQIKYEELQTLAGKHGDDLRRTKTEISEMNRNINRLQAEIEGLKGQRASLEAAIADAEQRGEMAVKDAQAKLAELEAALRNAKQDMARQLREYQELMNVKLALDVEIATYRKLLEGEESRLESGMQNMSIHTKTTSGYAGGLTSSYGTPGFNYSLSPGSFSRTSSKPVVVKKIETRDGKLVSESSDVLSK.

A head region spans residues 1–97 (MSIRVTQKSY…DPNIQAVRTQ (97 aa)). At S9 the chain carries Phosphoserine; by PKC/PRKCE. K11 participates in a covalent cross-link: Glycyl lysine isopeptide (Lys-Gly) (interchain with G-Cter in SUMO2). Phosphoserine is present on residues S13, S15, S21, and S22. Residues 16 to 44 (APRSFSSRSYTSGPGSRISSSAFSRVGSS) are disordered. An Omega-N-methylarginine modification is found at R23. S24 is modified (phosphoserine; by PKC/PRKCE). T26 is subject to Phosphothreonine. S27 and S31 each carry phosphoserine. R32 carries the post-translational modification Omega-N-methylarginine. Residues S34 and S39 each carry the phosphoserine modification. R40 is modified (omega-N-methylarginine). S43 and S44 each carry phosphoserine. R48 is modified (asymmetric dimethylarginine; alternate). Position 48 is an omega-N-methylarginine; alternate (R48). S81 is modified (phosphoserine; by MAPK). The coil 1A stretch occupies residues 98–133 (EKEQIKTLNNKFASFIDKVRHLEQQNKVLETKWNLL). The 312-residue stretch at 98 to 409 (EKEQIKTLNN…KLLEGEESRL (312 aa)) folds into the IF rod domain. Residue K108 is modified to N6-malonyllysine. Residues K129 and K137 each participate in a glycyl lysine isopeptide (Lys-Gly) (interchain with G-Cter in SUMO2) cross-link. A linker 1 region spans residues 134 to 150 (QQQKTARSNIDNMFESY). Positions 151–242 (INNLRRQLET…QLYEEEIREM (92 aa)) are coil 1B. K204 is covalently cross-linked (Glycyl lysine isopeptide (Lys-Gly) (interchain with G-Cter in SUMO1); alternate). A Glycyl lysine isopeptide (Lys-Gly) (interchain with G-Cter in SUMO2); alternate cross-link involves residue K204. Position 214 is an N6-acetyllysine (K214). Position 235 is a phosphotyrosine (Y235). Positions 243-266 (QSQISDTSVVLEMDNNRNLDLDGI) are linker 12. Residues 267–405 (IAEVKAQYEE…ATYRKLLEGE (139 aa)) are coil 2. The segment at 268–389 (AEVKAQYEEI…EYQELMNVKL (122 aa)) is necessary for interaction with PNN. K271 participates in a covalent cross-link: Glycyl lysine isopeptide (Lys-Gly) (interchain with G-Cter in SUMO2). S281 is modified (phosphoserine). Residue K292 forms a Glycyl lysine isopeptide (Lys-Gly) (interchain with G-Cter in SUMO2) linkage. K302 participates in a covalent cross-link: Glycyl lysine isopeptide (Lys-Gly) (interchain with G-Cter in SUMO2); alternate. Position 302 is an N6-acetyllysine; alternate (K302). K311 is covalently cross-linked (Glycyl lysine isopeptide (Lys-Gly) (interchain with G-Cter in SUMO2)). Residue K332 forms a Glycyl lysine isopeptide (Lys-Gly) (interchain with G-Cter in SUMO2); alternate linkage. At K332 the chain carries N6-acetyllysine; alternate. S337 carries the phosphoserine modification. Residue K400 forms a Glycyl lysine isopeptide (Lys-Gly) (interchain with G-Cter in SUMO2) linkage. A tail region spans residues 406 to 478 (ESRLESGMQN…VSESSDVLSK (73 aa)). Residues S407, S411, S417, S424, and S433 each carry the phosphoserine modification. Residue K467 forms a Glycyl lysine isopeptide (Lys-Gly) (interchain with G-Cter in SUMO1); alternate linkage. K467 participates in a covalent cross-link: Glycyl lysine isopeptide (Lys-Gly) (interchain with G-Cter in SUMO2); alternate. 4 positions are modified to phosphoserine: S470, S472, S473, and S477.

It belongs to the intermediate filament family. Heterotetramer of two type I and two type II keratins. Forms a heterodimer with KRT18. Associates with KRT20. Interacts with PNN. When associated with KRT19, interacts with DMD. Interacts with TCHP. Interacts with APEX1. Interacts with GPER1. Interacts with EPPK1. Interacts with PKP1 and PKP2. Post-translationally, O-glycosylated. O-GlcNAcylation at multiple sites increases solubility, and decreases stability by inducing proteasomal degradation. O-glycosylated (O-GlcNAcylated), in a cell cycle-dependent manner. Expressed in bladder, liver, exocervix and (in very low amounts) esophagus.

It localises to the cytoplasm. Its subcellular location is the nucleus. The protein resides in the nucleoplasm. The protein localises to the nucleus matrix. In terms of biological role, together with KRT19, helps to link the contractile apparatus to dystrophin at the costameres of striated muscle. This is Keratin, type II cytoskeletal 8 (KRT8) from Bos taurus (Bovine).